The chain runs to 278 residues: Large ribosomal subunit protein uL2 (278 aa).

The tract at residues 202–278 is disordered; it reads ANINDGKAGR…IMRSRHQRKK (77 aa).

It belongs to the universal ribosomal protein uL2 family. As to quaternary structure, part of the 50S ribosomal subunit. Forms a bridge to the 30S subunit in the 70S ribosome.

Its function is as follows. One of the primary rRNA binding proteins. Required for association of the 30S and 50S subunits to form the 70S ribosome, for tRNA binding and peptide bond formation. It has been suggested to have peptidyltransferase activity; this is somewhat controversial. Makes several contacts with the 16S rRNA in the 70S ribosome. The chain is Large ribosomal subunit protein uL2 from Rhizobium johnstonii (strain DSM 114642 / LMG 32736 / 3841) (Rhizobium leguminosarum bv. viciae).